Here is a 172-residue protein sequence, read N- to C-terminus: Shikimate kinase (172 aa).

Residue 11 to 16 participates in ATP binding; that stretch reads GAGKST. A Mg(2+)-binding site is contributed by Ser-15. Positions 33, 57, and 79 each coordinate substrate. Arg-117 contributes to the ATP binding site. Arg-136 serves as a coordination point for substrate. An ATP-binding site is contributed by Arg-153.

Belongs to the shikimate kinase family. Monomer. Requires Mg(2+) as cofactor.

Its subcellular location is the cytoplasm. It carries out the reaction shikimate + ATP = 3-phosphoshikimate + ADP + H(+). Its pathway is metabolic intermediate biosynthesis; chorismate biosynthesis; chorismate from D-erythrose 4-phosphate and phosphoenolpyruvate: step 5/7. Functionally, catalyzes the specific phosphorylation of the 3-hydroxyl group of shikimic acid using ATP as a cosubstrate. The sequence is that of Shikimate kinase from Pseudomonas savastanoi pv. phaseolicola (strain 1448A / Race 6) (Pseudomonas syringae pv. phaseolicola (strain 1448A / Race 6)).